Here is a 264-residue protein sequence, read N- to C-terminus: Cysteine-rich repeat secretory protein 26 (264 aa).

The N-terminal stretch at 1-27 (MSSNIFGSVPILVVVAIQLLLVHNVSS) is a signal peptide. Gnk2-homologous domains follow at residues 34-142 (YLNH…SVDS) and 148-261 (YKRM…LYPF).

It belongs to the cysteine-rich repeat secretory protein family.

Its subcellular location is the secreted. The polypeptide is Cysteine-rich repeat secretory protein 26 (CRRSP26) (Arabidopsis thaliana (Mouse-ear cress)).